A 100-amino-acid chain; its full sequence is Urease subunit gamma (100 aa).

Belongs to the urease gamma subunit family. As to quaternary structure, heterotrimer of UreA (gamma), UreB (beta) and UreC (alpha) subunits. Three heterotrimers associate to form the active enzyme.

It localises to the cytoplasm. The enzyme catalyses urea + 2 H2O + H(+) = hydrogencarbonate + 2 NH4(+). It participates in nitrogen metabolism; urea degradation; CO(2) and NH(3) from urea (urease route): step 1/1. The sequence is that of Urease subunit gamma from Saccharopolyspora erythraea (strain ATCC 11635 / DSM 40517 / JCM 4748 / NBRC 13426 / NCIMB 8594 / NRRL 2338).